A 33-amino-acid chain; its full sequence is DCLGWFSGCDPNNNKCCEGYVCHWKYPWCRYDL.

Cystine bridges form between Cys2/Cys17, Cys9/Cys22, and Cys16/Cys29. Leu33 carries the post-translational modification Leucine amide.

This sequence belongs to the neurotoxin 10 (Hwtx-1) family. 22 (Htx-4) subfamily. As to expression, expressed by the venom gland.

It is found in the secreted. Functionally, gating modifier toxin that traps voltage-sensing domain II of voltage-gated sodium channels in the resting state without significantly altering the voltage-dependence of activation and inactivation, or delay in recovery from inactivation. Inhibits hNav1.7/SCN9A (IC(50)=134 nM), followed in rank order of potency by Nav1.6/SCN8A (IC(50)=191 nM), Nav1.2/SCN2A (IC(50)=239 nM), Nav1.3/SCN3A (IC(50)=547 nM) and Nav1.1/SCN1A (IC(50)=674 nM). Its binding to Nav1.2, Nav1.3 and Nav1.7 is slowly reversible and incomplete, with ~25% of Nav1.2, ~50% of Nav1.3 and ~40% of Nav1.7 channels recovering from block after a 30 minutes washout, respectively. Binds in the aqueous cleft formed between the S1-S2 and S3-S4 loops of each channel subtype, primarily targeting the S3-S4 loop. In Selenotypus sp. (Feather-legged tarantula), this protein is Mu-theraphotoxin-Ssp1a.